A 150-amino-acid polypeptide reads, in one-letter code: Arginine repressor (150 aa).

It belongs to the ArgR family.

It localises to the cytoplasm. The protein operates within amino-acid biosynthesis; L-arginine biosynthesis [regulation]. Functionally, regulates arginine biosynthesis genes. The polypeptide is Arginine repressor (Clostridium beijerinckii (strain ATCC 51743 / NCIMB 8052) (Clostridium acetobutylicum)).